The following is a 399-amino-acid chain: uncharacterized protein (399 aa).

The disordered stretch occupies residues alanine 375 to arginine 399.

It belongs to the mycobacterial PPE family.

This is an uncharacterized protein from Mycobacterium tuberculosis (strain CDC 1551 / Oshkosh).